The following is a 691-amino-acid chain: MSGLQSVDWQIASNRQAHHTERFYGKDLLVRRGQLFQVSLTLSQGLSSGGRVTFTASTGPYPSESANTKAVFPLSNGTSSSGWGAQLVSSRNNVLNISILSPANAPIGRYTLNMQISSQGSDSTLKLGTFILLFNPWLQADSVFMSNHAEREEYVQEDAGIIFVGSTNRISMIGWNYGQFEEGILNICLSVLDNSLNFRRDPATDVAHRNDPKYVGRVLSAMINGNDDSGVISGNWSGSYTGGRDPRNWNGSVEILKEWQRSGFRPVRYGQCWVFAGTLNTVLRCLGIPSRVITNFNSAHDTDQNLSVDVYYDPLGRPMDKGSDSVWNFHVWNEAWFVRSDLGPSYNGWQVLDATPQERSQGVFQCGPASVIAIREGNVDWDFDMPFIFAEVNADRITWIYESNGALKKNSADTHSVGKHISTKAVGSNSRMDVTEKYKYPEGSSQERQVFEKALRKLKPTMSFSATSASSLAREEREPSISGRFKVAGVLTVGKEVNLILMLKNLTSDTKTVTVNMTAWTIVYNGTLVHEVWKDSVTKSLNPEEEIEHPVKIAYAQYEKYLKADNMIRTTAVCQVTDEPEVVVERDIILDNPTLTLEVLDEARVQKPVNVQMLFSNPLDEPVKDCVLMVEGSGLLLGNLKIDVPALRPKERSRVRFEILPTRSGTKQLLANFSCNKFPAIKAMLSVDVAE.

Y110 is modified (phosphotyrosine). T111 is subject to Phosphothreonine. Residues A221, N224, N226, and D227 each coordinate Ca(2+). The active site involves C272. 5 residues coordinate Ca(2+): D301, D303, N305, S307, and D324. Catalysis depends on residues H330 and D353. N393, T414, E442, and E447 together coordinate Ca(2+).

Belongs to the transglutaminase superfamily. Transglutaminase family. In terms of assembly, consists of two polypeptide chains, which are synthesized as a precursor form of a single polypeptide. Ca(2+) is required as a cofactor. Post-translationally, activated by proteolytic processing. In vitro activation is commonly achieved by cleavage with dispase, a neutral bacterial protease. Physiological activation may be catalyzed by CTSL and, to a lesser extent, by CTSS.

It localises to the cytoplasm. It catalyses the reaction L-glutaminyl-[protein] + L-lysyl-[protein] = [protein]-L-lysyl-N(6)-5-L-glutamyl-[protein] + NH4(+). Functionally, catalyzes the calcium-dependent formation of isopeptide cross-links between glutamine and lysine residues in various proteins, as well as the conjugation of polyamines to proteins. Involved in the formation of the cornified envelope (CE), a specialized component consisting of covalent cross-links of proteins beneath the plasma membrane of terminally differentiated keratinocytes. Catalyzes small proline-rich proteins and LOR cross-linking to form small interchain oligomers, which are further cross-linked by TGM1 onto the growing CE scaffold. In hair follicles, involved in cross-linking structural proteins to hardening the inner root sheath. This Bos taurus (Bovine) protein is Protein-glutamine gamma-glutamyltransferase E (TGM3).